Here is a 221-residue protein sequence, read N- to C-terminus: Charged multivesicular body protein 3 (221 aa).

Glycine 2 carries N-myristoyl glycine lipidation. A coiled-coil region spans residues 22–54; that stretch reads KIRKEMRVIDRQIRDIQREEEKVKRSIKDAAKK. 2 important for autoinhibitory function regions span residues 59–64 and 168–169; these read VCIILA and IL. Residues 144–221 adopt a coiled-coil conformation; the sequence is LEDTLEGMDD…MQSRLAALRS (78 aa). A disordered region spans residues 181–221; sequence PSKVTDLPDPVAIGATAAPEEESEEEEEIEEMQSRLAALRS. Acidic residues predominate over residues 199-211; that stretch reads PEEESEEEEEIEE. Positions 200-210 match the MIT-interacting motif motif; the sequence is EEESEEEEEIE. Interaction with STAMBP stretches follow at residues 202-206 and 220-221; these read ESEEE and RS.

This sequence belongs to the SNF7 family. As to quaternary structure, probable core component of the endosomal sorting required for transport complex III (ESCRT-III). ESCRT-III components are thought to multimerize to form a flat lattice on the perimeter membrane of the endosome. Several assembly forms of ESCRT-III may exist that interact and act sequentially.

Its subcellular location is the cytoplasm. It localises to the cytosol. The protein resides in the membrane. The protein localises to the endosome. It is found in the late endosome membrane. In terms of biological role, probable core component of the endosomal sorting required for transport complex III (ESCRT-III) which is involved in multivesicular bodies (MVBs) formation and sorting of endosomal cargo proteins into MVBs. MVBs contain intraluminal vesicles (ILVs) that are generated by invagination and scission from the limiting membrane of the endosome and mostly are delivered to lysosomes enabling degradation of membrane proteins, such as stimulated growth factor receptors, lysosomal enzymes and lipids. Involved in late stages of cytokinesis. Plays a role in endosomal sorting/trafficking of EGF receptor. The sequence is that of Charged multivesicular body protein 3 (chmp3) from Danio rerio (Zebrafish).